A 624-amino-acid chain; its full sequence is Phosphatidylinositol 4-kinase lsb6 (624 aa).

Residues 1–31 show a composition bias toward polar residues; sequence MESTFHSDTLDSFPNYQENSLNTNEEQTNPL. The segment at 1-53 is disordered; that stretch reads MESTFHSDTLDSFPNYQENSLNTNEEQTNPLESLRDGWASSNSSSSSSLLLPD. A compositionally biased stretch (low complexity) spans 40-51; the sequence is SSNSSSSSSLLL. The 376-residue stretch at 145-520 folds into the PI3K/PI4K catalytic domain; sequence GVFPVLISKG…LLELPNLYVV (376 aa). The G-loop stretch occupies residues 151–157; sequence ISKGSSG. The interval 346–354 is catalytic loop; that stretch reads RNTDRNLDN. Residues 409–429 are activation loop; sequence AIDNSLAFPYKHPDSWRSFPY.

Belongs to the PI3/PI4-kinase family. Requires Mg(2+) as cofactor. Mn(2+) serves as cofactor.

The protein localises to the cell membrane. It is found in the vacuole membrane. It localises to the golgi apparatus membrane. It carries out the reaction a 1,2-diacyl-sn-glycero-3-phospho-(1D-myo-inositol) + ATP = a 1,2-diacyl-sn-glycero-3-phospho-(1D-myo-inositol 4-phosphate) + ADP + H(+). May play a role in endocytic and/or exocytic pathways. The protein is Phosphatidylinositol 4-kinase lsb6 (lsb6) of Schizosaccharomyces pombe (strain 972 / ATCC 24843) (Fission yeast).